Reading from the N-terminus, the 185-residue chain is Elongation factor P (185 aa).

This sequence belongs to the elongation factor P family.

Its subcellular location is the cytoplasm. Its pathway is protein biosynthesis; polypeptide chain elongation. Functionally, involved in peptide bond synthesis. Stimulates efficient translation and peptide-bond synthesis on native or reconstituted 70S ribosomes in vitro. Probably functions indirectly by altering the affinity of the ribosome for aminoacyl-tRNA, thus increasing their reactivity as acceptors for peptidyl transferase. The chain is Elongation factor P from Desulfitobacterium hafniense (strain Y51).